The chain runs to 138 residues: Mini-ribonuclease 3 (138 aa).

Asp33 is a catalytic residue.

The protein belongs to the MrnC RNase family. In terms of assembly, homodimer. The cofactor is Mg(2+).

It is found in the cytoplasm. In terms of biological role, involved in correct processing of both the 5' and 3' ends of 23S rRNA precursor. Processes 30S rRNA precursor transcript even in absence of ribonuclease 3 (Rnc); Rnc processes 30S rRNA into smaller rRNA precursors. In Synechococcus sp. (strain ATCC 27144 / PCC 6301 / SAUG 1402/1) (Anacystis nidulans), this protein is Mini-ribonuclease 3.